Reading from the N-terminus, the 303-residue chain is HTH-type transcriptional regulator LysG (303 aa).

The 57-residue stretch at 6-62 folds into the HTH lysR-type domain; sequence LDGPQLAALAAVVELGSFDAAAERLHVTPSAVSQRIKSLEQQVGQVLVVREKPCRAT. The segment at residues 23 to 42 is a DNA-binding region (H-T-H motif); it reads FDAAAERLHVTPSAVSQRIK.

Belongs to the LysR transcriptional regulatory family. As to quaternary structure, homodimer.

Positively regulates the expression of the exporter LysE and represses its own expression. The sequence is that of HTH-type transcriptional regulator LysG from Mycobacterium bovis (strain ATCC BAA-935 / AF2122/97).